The primary structure comprises 299 residues: 33 kDa chaperonin (299 aa).

2 disulfide bridges follow: C239-C241 and C272-C275.

Belongs to the HSP33 family. Post-translationally, under oxidizing conditions two disulfide bonds are formed involving the reactive cysteines. Under reducing conditions zinc is bound to the reactive cysteines and the protein is inactive.

It localises to the cytoplasm. In terms of biological role, redox regulated molecular chaperone. Protects both thermally unfolding and oxidatively damaged proteins from irreversible aggregation. Plays an important role in the bacterial defense system toward oxidative stress. This Acaryochloris marina (strain MBIC 11017) protein is 33 kDa chaperonin.